A 200-amino-acid polypeptide reads, in one-letter code: Synaptobrevin homolog YKT6 (200 aa).

The region spanning 7-129 is the Longin domain; the sequence is GVFRSGGEKA…LKMKQLDTYI (123 aa). A v-SNARE coiled-coil homology domain is found at 140 to 200; that stretch reads AIMKVQQELD…KKSNSCCIIM (61 aa). Phosphothreonine is present on Thr158. Cys196 carries S-palmitoyl cysteine lipidation. A Cysteine methyl ester modification is found at Cys197. The S-farnesyl cysteine moiety is linked to residue Cys197. Residues 198–200 constitute a propeptide, removed in mature form; that stretch reads IIM.

Belongs to the synaptobrevin family.

The protein localises to the cell membrane. The protein is Synaptobrevin homolog YKT6 (YKT6) of Saccharomyces cerevisiae (strain ATCC 204508 / S288c) (Baker's yeast).